The chain runs to 353 residues: Phosphate acyltransferase (353 aa).

It belongs to the PlsX family. Homodimer. Probably interacts with PlsY.

It localises to the cytoplasm. The catalysed reaction is a fatty acyl-[ACP] + phosphate = an acyl phosphate + holo-[ACP]. The protein operates within lipid metabolism; phospholipid metabolism. Functionally, catalyzes the reversible formation of acyl-phosphate (acyl-PO(4)) from acyl-[acyl-carrier-protein] (acyl-ACP). This enzyme utilizes acyl-ACP as fatty acyl donor, but not acyl-CoA. This is Phosphate acyltransferase from Syntrophobacter fumaroxidans (strain DSM 10017 / MPOB).